Here is a 1095-residue protein sequence, read N- to C-terminus: MLHYLLSVLLLIFENILELCMCITLVILIYYFWPSKQLEDATLQYFPDTTQNSSEVFIDPPERNPIFYPISPLRHKKRSSKEEMTPDKKRDSSEKISKQPPRELFEPNEQEQVPSHIKPEIFFVLKALEGLELPTTWQLDPKDVETLSIDTGSVVLSPGRANDVIVVVISGELGIFTNVSLGDKRYDCNIKTLRSGESYFSQTSIIEILMNEKPNNKYIHLKALTSCRVATYHLTSFHTSFIANPQQWIRTIQVVMTRLQQCTLITCNMYLGIGGKCLNAKRKLPDSGKFKDFNKLTEAEQLNKGVEAIAQAMGIPDQSDKLREKVRKYECQAGTVVTEENSFEIDMIFVVFGKLRLKRGDLEHDDTGTSLTFDVYPGDMLPSMQILTNEPAMCSAKALEKTIYFKICRDEYIQFLFAHPVIYLRLAFHALQFISPFARVFDMAVHWHRIETGQALFRQGDKSDSMHIVMGGRLRAVDSTKIIEEYGRLDLIGITDMAEKRPRRNTVMAVRFSHIVCIPENLLSFVKIRYPQVGNKLLKLISKCWKAPTPETMSHVETTRNQNLRTIAIVPASRRVPLTEFTCELYNQLSKHVKTLRLSSSVVENYFESEVITKKADYGLMHWLNVQEIAYSLVLYQCDFHKTNWTRRCLRMADAILMVALGTESKEEQVLAEALLSCNEKGVRQSKELVFLWPIDTPTPSGTAAWIKESYYSGYHHLRAPNRLFSFPLKTREKKIVEYYETTVYGEISYQSDFSRLARILTGNAIGIVFGGGGARGAAHAGALRALIEKKVQIDMVGGTSIGALFGSLYATTPDIRAVGRMKDFFTDRLRNNILDVVRDLTWPYCGILTGHRFNLCVQRMLNDVNIEDCWVSFFCITTDLTSSSMRIHRNGIMWPVVRSSMSIAGYVPPICDPQDGHLLLDGAYVNNLPADIMRSLGANVVIAIDVGMSDDNTNLRNYGFSISGTWCLFKRWWPFGEELRVLNMNEVQNRLAYVCCVNQMEIVKNAQYCYYVKLPIESFGIFDFSKFDQAAQIGYDITKQKMEEFFEDSVATRRKLLGCARNVRQTPQKSKNDNILSFVNMPVLPKPPSDIKSD.

The chain crosses the membrane as a helical span at residues 9 to 29 (LLLIFENILELCMCITLVILI). The interval 75 to 113 (HKKRSSKEEMTPDKKRDSSEKISKQPPRELFEPNEQEQV) is disordered. Positions 80 to 105 (SKEEMTPDKKRDSSEKISKQPPRELF) are enriched in basic and acidic residues. A nucleoside 3',5'-cyclic phosphate-binding positions include 144 to 237 (VETL…LTSF), 327 to 416 (RKYE…IQFL), and 450 to 509 (IETG…TVMA). The 168-residue stretch at 768–935 (IVFGGGGARG…VNNLPADIMR (168 aa)) folds into the PNPLA domain. The short motif at 772–777 (GGGARG) is the GXGXXG element. The short motif at 799–803 (GTSIG) is the GXSXG element. Ser801 acts as the Nucleophile in catalysis. Catalysis depends on Asp922, which acts as the Proton acceptor. The DGA/G signature appears at 922–924 (DGA).

The protein belongs to the NTE family.

The protein localises to the membrane. The polypeptide is Putative patatin-like phospholipase domain-containing protein M110.7 (Caenorhabditis elegans).